A 258-amino-acid polypeptide reads, in one-letter code: C4b-binding protein beta chain (258 aa).

The N-terminal stretch at 1-15 (MLCLVVCCLIWLISA) is a signal peptide. One can recognise a Sushi 1; atypical; lacks a Cys domain in the interval 18–75 (GSCSEPPPVNNSVFVGKETEEQILGIYLCIKGYHLVGKKSLVFDPSKEWNSTLPECLL). Residues Asn27, Asn67, Asn89, Asn95, and Asn114 are each glycosylated (N-linked (GlcNAc...) asparagine). Disulfide bonds link Cys46/Cys73, Cys78/Cys118, Cys104/Cys131, Cys136/Cys176, and Cys162/Cys188. Sushi domains are found at residues 76–133 (GHCP…ICRS) and 134–190 (RDCE…TCES). A glycan (N-linked (GlcNAc...) asparagine) is linked at Asn218.

Disulfide-linked complex of alpha and beta chains.

It localises to the secreted. In terms of biological role, controls the classical pathway of complement activation. It binds as a cofactor to C3b/C4b inactivator (C3bINA), which then hydrolyzes the complement fragment C4b. It also accelerates the degradation of the C4bC2a complex (C3 convertase) by dissociating the complement fragment C2a. It also interacts with anticoagulant protein S and with serum amyloid P component. This Rattus norvegicus (Rat) protein is C4b-binding protein beta chain (C4bpb).